The following is a 217-amino-acid chain: UDP-N-acetylglucosamine transferase subunit ALG14 (217 aa).

The Lumenal segment spans residues 1 to 3 (MLS). Residues 4–26 (ILILAATAAGLVILLFQRLWTVL) form a helical membrane-spanning segment. At 27 to 217 (GPHHVTPRES…PKSVYLGRIV (191 aa)) the chain is on the cytoplasmic side.

The protein belongs to the ALG14 family. Forms with ALG13 the active heterodimeric UDP-N-acetylglucosamine transferase complex.

It is found in the endoplasmic reticulum membrane. In terms of biological role, part of the UDP-N-acetylglucosamine transferase complex that operates in the biosynthetic pathway of dolichol-linked oligosaccharides, the glycan precursors employed in protein asparagine (N)-glycosylation. The assembly of dolichol-linked oligosaccharides begins on the cytosolic side of the endoplasmic reticulum membrane and finishes in its lumen. The sequential addition of sugars to dolichol pyrophosphate produces dolichol-linked oligosaccharides containing fourteen sugars, including two GlcNAcs, nine mannoses and three glucoses. Once assembled, the oligosaccharides are transferred from the lipid to nascent proteins by oligosaccharyltransferases. Functions as a protein-membrane adapter recruiting ALG13 at the cytoplasmic face of the endoplasmic reticulum, where the complex catalyzes the second step of dolichol pyrophosphate biosynthesis, transferring a beta1,4-linked N-acetylglucosamine (GlcNAc) from UDP-GlcNAc to GlcNAc-pyrophosphatedolichol (Gn-PDol) to produce N,N'-diacetylchitobiosyl diphosphodolichol. N,N'-diacetylchitobiosyl diphosphodolichol is a substrate for ALG1, the following enzyme in the biosynthetic pathway. The sequence is that of UDP-N-acetylglucosamine transferase subunit ALG14 from Mus musculus (Mouse).